A 142-amino-acid chain; its full sequence is Thioredoxin-like protein 4A (142 aa).

Cysteines 38 and 79 form a disulfide. The residue at position 132 (serine 132) is a Phosphoserine.

This sequence belongs to the DIM1 family. Component of the precatalytic spliceosome (spliceosome B complex). Component of the U5 snRNP complex. Component of the U4/U6-U5 tri-snRNP complex. The U4/U6-U5 tri-snRNP complex is a building block of the precatalytic spliceosome (spliceosome B complex). The U4/U6-U5 tri-snRNP complex is composed of the U4, U6 and U5 snRNAs and at least PRPF3, PRPF4, PRPF6, PRPF8, PRPF31, SNRNP200, TXNL4A, SNRNP40, SNRPB, SNRPD1, SNRPD2, SNRPD3, SNRPE, SNRPF, SNRPG, DDX23, CD2BP2, PPIH, SNU13, EFTUD2, SART1 and USP39, plus LSM2, LSM3, LSM4, LSM5, LSM6, LSM7 and LSM8. Directly interacts with CD2BP2. Interacts with HNRPF, HNRPH2, NEDD9 and PQBP1. Interacts with ERBB4. In terms of processing, the disulfide bond seen in structures determined by X-ray crystallography and NMR is not essential for protein folding and function.

Its subcellular location is the nucleus. Functionally, plays a role in pre-mRNA splicing as component of the U5 snRNP and U4/U6-U5 tri-snRNP complexes that are involved in spliceosome assembly, and as component of the precatalytic spliceosome (spliceosome B complex). The polypeptide is Thioredoxin-like protein 4A (TXNL4A) (Homo sapiens (Human)).